Here is a 251-residue protein sequence, read N- to C-terminus: Probable transcriptional regulatory protein AAur_2300 (251 aa).

This sequence belongs to the TACO1 family.

It localises to the cytoplasm. The protein is Probable transcriptional regulatory protein AAur_2300 of Paenarthrobacter aurescens (strain TC1).